We begin with the raw amino-acid sequence, 612 residues long: Dihydroxy-acid dehydratase (612 aa).

D81 serves as a coordination point for Mg(2+). Residue C122 coordinates [2Fe-2S] cluster. 2 residues coordinate Mg(2+): D123 and K124. Residue K124 is modified to N6-carboxylysine. Position 193 (C193) interacts with [2Fe-2S] cluster. A Mg(2+)-binding site is contributed by E489. Residue S515 is the Proton acceptor of the active site.

Belongs to the IlvD/Edd family. In terms of assembly, homodimer. The cofactor is [2Fe-2S] cluster. Requires Mg(2+) as cofactor.

It carries out the reaction (2R)-2,3-dihydroxy-3-methylbutanoate = 3-methyl-2-oxobutanoate + H2O. It catalyses the reaction (2R,3R)-2,3-dihydroxy-3-methylpentanoate = (S)-3-methyl-2-oxopentanoate + H2O. The protein operates within amino-acid biosynthesis; L-isoleucine biosynthesis; L-isoleucine from 2-oxobutanoate: step 3/4. It participates in amino-acid biosynthesis; L-valine biosynthesis; L-valine from pyruvate: step 3/4. In terms of biological role, functions in the biosynthesis of branched-chain amino acids. Catalyzes the dehydration of (2R,3R)-2,3-dihydroxy-3-methylpentanoate (2,3-dihydroxy-3-methylvalerate) into 2-oxo-3-methylpentanoate (2-oxo-3-methylvalerate) and of (2R)-2,3-dihydroxy-3-methylbutanoate (2,3-dihydroxyisovalerate) into 2-oxo-3-methylbutanoate (2-oxoisovalerate), the penultimate precursor to L-isoleucine and L-valine, respectively. The sequence is that of Dihydroxy-acid dehydratase from Xanthomonas oryzae pv. oryzae (strain MAFF 311018).